Reading from the N-terminus, the 202-residue chain is Orotate phosphoribosyltransferase (202 aa).

5-phospho-alpha-D-ribose 1-diphosphate contacts are provided by residues lysine 93 and 113–121 (EDIITTGGS). Positions 117 and 145 each coordinate orotate.

Belongs to the purine/pyrimidine phosphoribosyltransferase family. PyrE subfamily. Homodimer. Mg(2+) is required as a cofactor.

The catalysed reaction is orotidine 5'-phosphate + diphosphate = orotate + 5-phospho-alpha-D-ribose 1-diphosphate. It participates in pyrimidine metabolism; UMP biosynthesis via de novo pathway; UMP from orotate: step 1/2. Catalyzes the transfer of a ribosyl phosphate group from 5-phosphoribose 1-diphosphate to orotate, leading to the formation of orotidine monophosphate (OMP). This Campylobacter hominis (strain ATCC BAA-381 / DSM 21671 / CCUG 45161 / LMG 19568 / NCTC 13146 / CH001A) protein is Orotate phosphoribosyltransferase.